Here is a 163-residue protein sequence, read N- to C-terminus: MALNLQDKQAIVAEVNEAAKGALSAVVADSRGVTVEKMTELRKAAREAGVSMRVVRNTLLRRAVEGTEFECLKDTFTGPTLIAFSNEHPGAAARLFKDFAKANKEFEVKGAAFEGKIQDVEFLATLPTYEEAIARLMGTMKEAAAGKLVRTLAALRDKLQEAA.

The protein belongs to the universal ribosomal protein uL10 family. In terms of assembly, part of the ribosomal stalk of the 50S ribosomal subunit. The N-terminus interacts with L11 and the large rRNA to form the base of the stalk. The C-terminus forms an elongated spine to which L12 dimers bind in a sequential fashion forming a multimeric L10(L12)X complex.

In terms of biological role, forms part of the ribosomal stalk, playing a central role in the interaction of the ribosome with GTP-bound translation factors. This is Large ribosomal subunit protein uL10 from Glaesserella parasuis serovar 5 (strain SH0165) (Haemophilus parasuis).